The sequence spans 185 residues: MINEIKKDAQARMKKSLESLEHAFAKIRTGRAHPSILDGVMVSYYGADTPLRQVANVVAEDARTLALTVFDKSMIQAVEKAIMTSDLGLNPATAGTTIRVPMPALTEETRKGYTRQARAEAESARVAVRNIRRDALAQLKDLVKEKEISEDEERRAADEVQKLTDKAIAEVDKALEAKEADLMAV.

It belongs to the RRF family.

Its subcellular location is the cytoplasm. Functionally, responsible for the release of ribosomes from messenger RNA at the termination of protein biosynthesis. May increase the efficiency of translation by recycling ribosomes from one round of translation to another. The sequence is that of Ribosome-recycling factor from Azotobacter vinelandii (strain DJ / ATCC BAA-1303).